We begin with the raw amino-acid sequence, 471 residues long: Soluble pyridine nucleotide transhydrogenase (471 aa).

41–50 provides a ligand contact to FAD; it reads EREPSVGGGC.

Belongs to the class-I pyridine nucleotide-disulfide oxidoreductase family. Requires FAD as cofactor.

It is found in the cytoplasm. It catalyses the reaction NAD(+) + NADPH = NADH + NADP(+). Conversion of NADPH, generated by peripheral catabolic pathways, to NADH, which can enter the respiratory chain for energy generation. This chain is Soluble pyridine nucleotide transhydrogenase, found in Aliivibrio fischeri (strain ATCC 700601 / ES114) (Vibrio fischeri).